A 981-amino-acid chain; its full sequence is Ubiquitin carboxyl-terminal hydrolase 37 (981 aa).

The KEN box 1 signature appears at 32–34; it reads KEN. 2 short sequence motifs (D-box) span residues 71–79 and 96–105; these read RLMLTLQDN and RLFLDAVHQN. The tract at residues 111–306 is disordered; sequence MKPSQGSGSF…TPSAKRSLGF (196 aa). Ser114 is modified (phosphoserine). Over residues 135 to 148 the composition is skewed to polar residues; that stretch reads RQLSYSDNQVSSKR. Positions 149-159 are enriched in basic and acidic residues; that stretch reads GSLETKDDTPF. The D-box 3 signature appears at 160 to 168; that stretch reads RKVLGNPSR. Ser170 carries the post-translational modification Phosphoserine. Residues 183 to 200 show a composition bias toward low complexity; sequence RTIPSLTSTSTPLRSGLL. Residue Ser212 is modified to Phosphoserine. A KEN box 2 motif is present at residues 223 to 225; the sequence is KEN. Positions 245-259 are enriched in basic and acidic residues; that stretch reads SREKQLSLKQSEENR. A compositionally biased stretch (polar residues) spans 283–300; it reads PGSTNLDRTNISSQTPSA. In terms of domain architecture, USP spans 343 to 953; the sequence is QGFSNLGNTC…SGYIFFYMHK (611 aa). Cys352 (nucleophile) is an active-site residue. Ser630 carries the post-translational modification Phosphoserine; by CDK2. Phosphoserine is present on residues Ser652 and Ser654. 2 disordered regions span residues 670 to 705 and 721 to 797; these read EMSGSEQQQEDLEKDSKSCRIEPDKSELENSGFDGM and EASP…GEVD. 2 stretches are compositionally biased toward basic and acidic residues: residues 683-697 and 721-734; these read KDSKSCRIEPDKSEL and EASPSLSHEDDDKP. Residues 706–725 form the UIM 1 domain; the sequence is SEEELLAAVLEISKREASPS. Ser772 bears the Phosphoserine mark. The segment covering 776–788 has biased composition (basic and acidic residues); that stretch reads ITKDCDENKENKT. A KEN box 3 motif is present at residues 784–786; that stretch reads KEN. UIM domains are found at residues 808–827 and 830–849; these read REEQELQQALAQSLQEQEAW and KEDDDLKRATELSLQEFNNS. His908 functions as the Proton acceptor in the catalytic mechanism.

It belongs to the peptidase C19 family. In terms of assembly, interacts with FZR1/CDH1. Interacts with CDT1. Polyubiquitinated via 'Lys-11'-linked ubiquitin by the APC(CDH1) complex during late mitosis, leading to its degradation. Able to mediate auto-deubiquitination. Post-translationally, phosphorylated at Ser-630 by CDK2 during G1/S phase but not during mitosis; phosphorylation at Ser-630 is required for deubiquitinase activity. Also polyubiquitinated during early G1 phase, without leading to degradation. Phosphorylated at Ser-114 by ATM following DNA damage, which in turn increases its deubiquitination activity towards BLM.

The protein localises to the nucleus. The protein resides in the chromosome. The catalysed reaction is Thiol-dependent hydrolysis of ester, thioester, amide, peptide and isopeptide bonds formed by the C-terminal Gly of ubiquitin (a 76-residue protein attached to proteins as an intracellular targeting signal).. In terms of biological role, deubiquitinase that plays a role in different processes including cell cycle regulation, DNA replication or DNA damage response. Antagonizes the anaphase-promoting complex (APC/C) during G1/S transition by mediating deubiquitination of cyclin-A (CCNA1 and CCNA2), thereby promoting S phase entry. Specifically mediates deubiquitination of 'Lys-11'-linked polyubiquitin chains, a specific ubiquitin-linkage type mediated by the APC/C complex. Phosphorylation at Ser-628 during G1/S phase maximizes the deubiquitinase activity, leading to prevent degradation of cyclin-A (CCNA1 and CCNA2). Plays an important role in the regulation of DNA replication by stabilizing the licensing factor CDT1. Also plays an essential role beyond S-phase entry to promote the efficiency and fidelity of replication by deubiquitinating checkpoint kinase 1/CHK1, promoting its stability. Sustains the DNA damage response (DDR) by deubiquitinating and stabilizing the ATP-dependent DNA helicase BLM. Mechanistically, DNA double-strand breaks (DSB) promotes ATM-mediated phosphorylation of USP37 and enhances the binding between USP37 and BLM. Promotes cell migration by deubiquitinating and stabilizing the epithelial-mesenchymal transition (EMT)-inducing transcription factor SNAI. Plays a role in the regulation of mitotic spindle assembly and mitotic progression by associating with chromatin-associated WAPL and stabilizing it through deubiquitination. The sequence is that of Ubiquitin carboxyl-terminal hydrolase 37 (USP37) from Bos taurus (Bovine).